A 208-amino-acid chain; its full sequence is Sec-independent protein translocase protein TatB (208 aa).

The chain crosses the membrane as a helical span at residues 1–21 (MFDIGVGELTLIAVVALVVLG). A compositionally biased stretch (low complexity) spans 178–189 (APEPVAVAPVDA). The tract at residues 178–208 (APEPVAVAPVDAGTPAAWTPSAPAKLQEKQP) is disordered.

The protein belongs to the TatB family. The Tat system comprises two distinct complexes: a TatABC complex, containing multiple copies of TatA, TatB and TatC subunits, and a separate TatA complex, containing only TatA subunits. Substrates initially bind to the TatABC complex, which probably triggers association of the separate TatA complex to form the active translocon.

The protein localises to the cell inner membrane. Functionally, part of the twin-arginine translocation (Tat) system that transports large folded proteins containing a characteristic twin-arginine motif in their signal peptide across membranes. Together with TatC, TatB is part of a receptor directly interacting with Tat signal peptides. TatB may form an oligomeric binding site that transiently accommodates folded Tat precursor proteins before their translocation. The protein is Sec-independent protein translocase protein TatB of Xanthomonas euvesicatoria pv. vesicatoria (strain 85-10) (Xanthomonas campestris pv. vesicatoria).